A 113-amino-acid chain; its full sequence is UPF0482 protein YnfB (113 aa).

A signal peptide spans 1–28; sequence MNYTLSKRLCLTAMLTLAAVVYTTSAFA.

It belongs to the UPF0482 family.

This Salmonella arizonae (strain ATCC BAA-731 / CDC346-86 / RSK2980) protein is UPF0482 protein YnfB.